The sequence spans 426 residues: Serine--tRNA ligase (426 aa).

Position 229-231 (229-231) interacts with L-serine; sequence TAE. 260 to 262 is an ATP binding site; that stretch reads RSE. Glu283 provides a ligand contact to L-serine. An ATP-binding site is contributed by 347–350; sequence EIAS. Residue Ser383 participates in L-serine binding.

The protein belongs to the class-II aminoacyl-tRNA synthetase family. Type-1 seryl-tRNA synthetase subfamily. As to quaternary structure, homodimer. The tRNA molecule binds across the dimer.

The protein resides in the cytoplasm. It catalyses the reaction tRNA(Ser) + L-serine + ATP = L-seryl-tRNA(Ser) + AMP + diphosphate + H(+). The catalysed reaction is tRNA(Sec) + L-serine + ATP = L-seryl-tRNA(Sec) + AMP + diphosphate + H(+). Its pathway is aminoacyl-tRNA biosynthesis; selenocysteinyl-tRNA(Sec) biosynthesis; L-seryl-tRNA(Sec) from L-serine and tRNA(Sec): step 1/1. Functionally, catalyzes the attachment of serine to tRNA(Ser). Is also able to aminoacylate tRNA(Sec) with serine, to form the misacylated tRNA L-seryl-tRNA(Sec), which will be further converted into selenocysteinyl-tRNA(Sec). The protein is Serine--tRNA ligase of Rickettsia bellii (strain RML369-C).